An 83-amino-acid chain; its full sequence is Insect toxin 2-13 (83 aa).

Positions 1–21 (MKLLLLLIITASMLIEGLVNA) are cleaved as a signal peptide. An LCN-type CS-alpha/beta domain is found at 22-80 (DVYIRRHDGCKISCTVNDKYCDNECKSEGGSYGYCYAFGCWCEGLPNDKAWKSETNTCG). 4 disulfide bridges follow: cysteine 31–cysteine 79, cysteine 35–cysteine 56, cysteine 42–cysteine 61, and cysteine 46–cysteine 63. Glycine 80 carries the post-translational modification Glycine amide.

This sequence belongs to the long (4 C-C) scorpion toxin superfamily. Sodium channel inhibitor family. Beta subfamily. In terms of tissue distribution, expressed by the venom gland.

The protein resides in the secreted. In terms of biological role, depressant insect toxins cause a transient contraction paralysis followed by a slow flaccid paralysis. They bind voltage-independently to sodium channels (Nav) and block action potentials, primarily by depolarizing the axonal membrane and suppressing the sodium current. In Leiurus hebraeus (Hebrew deathstalker scorpion), this protein is Insect toxin 2-13.